The chain runs to 121 residues: Ribonuclease P protein component (121 aa).

It belongs to the RnpA family. Consists of a catalytic RNA component (M1 or rnpB) and a protein subunit.

It carries out the reaction Endonucleolytic cleavage of RNA, removing 5'-extranucleotides from tRNA precursor.. Functionally, RNaseP catalyzes the removal of the 5'-leader sequence from pre-tRNA to produce the mature 5'-terminus. It can also cleave other RNA substrates such as 4.5S RNA. The protein component plays an auxiliary but essential role in vivo by binding to the 5'-leader sequence and broadening the substrate specificity of the ribozyme. This chain is Ribonuclease P protein component, found in Coxiella burnetii (strain Dugway 5J108-111).